The primary structure comprises 280 residues: Transcription factor HES-1 (280 aa).

A disordered region spans residues 1–44; sequence MPADIMEKNSSSPVAATPASVNTTPDKPKTASEHRKSSKPIMEK. The span at 10–21 shows a compositional bias: low complexity; sequence SSSPVAATPASV. Residues 26–35 show a composition bias toward basic and acidic residues; that stretch reads DKPKTASEHR. Positions 34 to 91 constitute a bHLH domain; sequence HRKSSKPIMEKRRRARINESLSQLKTLILDALKKDSSRHSKLEKADILEMTVKHLRNL. The 34-residue stretch at 110 to 143 folds into the Orange domain; that stretch reads YRAGFSECMNEVTRFLSTCEGVNTEVRTRLLGHL. 2 disordered regions span residues 157–200 and 254–280; these read GQPH…PPGG and TSVGPNAVSPSSGPSLTADSMWRPWRN. 2 stretches are compositionally biased toward pro residues: residues 164–174 and 181–200; these read QAPPPPPPGPG and FAPPPPLVPIPGGAAPPPGG. A compositionally biased stretch (polar residues) spans 254 to 271; the sequence is TSVGPNAVSPSSGPSLTA. Residues 275 to 278 carry the WRPW motif motif; that stretch reads WRPW.

Transcription repression requires formation of a complex with a corepressor protein of the Groucho/TLE family. Interacts (via WPRW motif) with TLE1, and more weakly with TLE2. Interacts with HES6. Interacts with SIRT1. Interacts with an FA complex, composed of FANCA, FANCF, FANCG and FANCL, but not of FANCC, nor FANCE. In terms of processing, (Microbial infection) Ubiquitinated via human cytomegalovirus/HCMV protein IE1 that assembles a HES1 ubiquitination complex; leading to HES1 proteasomal degradation.

The protein localises to the nucleus. Functionally, transcriptional repressor of genes that require a bHLH protein for their transcription. May act as a negative regulator of myogenesis by inhibiting the functions of MYOD1 and ASH1. Binds DNA on N-box motifs: 5'-CACNAG-3' with high affinity and on E-box motifs: 5'-CANNTG-3' with low affinity. May play a role in a functional FA core complex response to DNA cross-link damage, being required for the stability and nuclear localization of FA core complex proteins, as well as for FANCD2 monoubiquitination in response to DNA damage. This chain is Transcription factor HES-1 (HES1), found in Homo sapiens (Human).